Reading from the N-terminus, the 165-residue chain is Cystatin-like protein (165 aa).

A signal peptide spans 1 to 19 (MDVALKLLLLAALTLLASA). Intrachain disulfides connect Cys-80–Cys-92 and Cys-104–Cys-118.

Involved in hypoxia tolerance. The sequence is that of Cystatin-like protein from Clarias batrachus (Walking catfish).